A 436-amino-acid chain; its full sequence is Calcium/calmodulin-regulated receptor-like kinase 2 (436 aa).

Residues 7–34 form a helical membrane-spanning segment; sequence LVVIGISVGLALGLLLALLLFFAIKWYY. Residues 65–88 form a disordered region; that stretch reads DRANTESSQPPENGAPTQHQPWWN. The span at 69-88 shows a compositional bias: polar residues; that stretch reads TESSQPPENGAPTQHQPWWN. The Protein kinase domain maps to 114–375; the sequence is QNFTTVLGQG…PSIGEVTQFI (262 aa). ATP is bound by residues 120 to 128 and Lys-142; that span reads LGQGSFGPV. Tyr-187 bears the Phosphotyrosine mark. The active-site Proton acceptor is the Asp-239. The residue at position 276 (Thr-276) is a Phosphothreonine. Tyr-284 bears the Phosphotyrosine mark.

The protein belongs to the protein kinase superfamily. Ser/Thr protein kinase family.

The protein resides in the cell membrane. It catalyses the reaction L-seryl-[protein] + ATP = O-phospho-L-seryl-[protein] + ADP + H(+). The catalysed reaction is L-threonyl-[protein] + ATP = O-phospho-L-threonyl-[protein] + ADP + H(+). The polypeptide is Calcium/calmodulin-regulated receptor-like kinase 2 (Arabidopsis thaliana (Mouse-ear cress)).